A 225-amino-acid polypeptide reads, in one-letter code: Enolase-phosphatase E1 (225 aa).

This sequence belongs to the HAD-like hydrolase superfamily. MasA/MtnC family. As to quaternary structure, monomer. It depends on Mg(2+) as a cofactor.

It carries out the reaction 5-methylsulfanyl-2,3-dioxopentyl phosphate + H2O = 1,2-dihydroxy-5-(methylsulfanyl)pent-1-en-3-one + phosphate. It participates in amino-acid biosynthesis; L-methionine biosynthesis via salvage pathway; L-methionine from S-methyl-5-thio-alpha-D-ribose 1-phosphate: step 3/6. The protein operates within amino-acid biosynthesis; L-methionine biosynthesis via salvage pathway; L-methionine from S-methyl-5-thio-alpha-D-ribose 1-phosphate: step 4/6. Its function is as follows. Bifunctional enzyme that catalyzes the enolization of 2,3-diketo-5-methylthiopentyl-1-phosphate (DK-MTP-1-P) into the intermediate 2-hydroxy-3-keto-5-methylthiopentenyl-1-phosphate (HK-MTPenyl-1-P), which is then dephosphorylated to form the acireductone 1,2-dihydroxy-3-keto-5-methylthiopentene (DHK-MTPene). This chain is Enolase-phosphatase E1, found in Shewanella denitrificans (strain OS217 / ATCC BAA-1090 / DSM 15013).